A 93-amino-acid chain; its full sequence is MTDTPDVQPPKIEFPCERYPIKVIGDAGEGFSDLVVEIIQRHAPDLDVETLVVRDSSKGRFLSVQVLITATDVDQLQAIHNDLRATGRVHMVL.

This sequence belongs to the UPF0250 family.

The sequence is that of UPF0250 protein PA3998 from Pseudomonas aeruginosa (strain ATCC 15692 / DSM 22644 / CIP 104116 / JCM 14847 / LMG 12228 / 1C / PRS 101 / PAO1).